Reading from the N-terminus, the 360-residue chain is Peptide chain release factor 1 (360 aa).

Residue Gln235 is modified to N5-methylglutamine. Residues 284–304 form a disordered region; the sequence is KVDSERSADRKSQVGSGDRSE.

It belongs to the prokaryotic/mitochondrial release factor family. In terms of processing, methylated by PrmC. Methylation increases the termination efficiency of RF1.

Its subcellular location is the cytoplasm. In terms of biological role, peptide chain release factor 1 directs the termination of translation in response to the peptide chain termination codons UAG and UAA. The protein is Peptide chain release factor 1 of Agrobacterium fabrum (strain C58 / ATCC 33970) (Agrobacterium tumefaciens (strain C58)).